A 442-amino-acid chain; its full sequence is Lysosomal dipeptide transporter MFSD1 (442 aa).

Positions 8–9 (LL) match the Dileucine internalization motif motif. 10 consecutive transmembrane segments (helical) span residues 38 to 58 (LLVL…YDNP), 85 to 105 (TVIF…GALV), 107 to 127 (AFWL…SLAV), 187 to 207 (LLIG…LAYL), 238 to 258 (LWLI…FIGL), 276 to 296 (AINS…GILV), 303 to 323 (IIWV…LAFT), 333 to 353 (LLGV…AFVV), 364 to 384 (FMQS…GMIL), and 390 to 410 (LFLE…VVML).

Belongs to the major facilitator superfamily. As to quaternary structure, homodimer. Interacts with lysosomal protein GLMP (via lumenal domain); the interaction starts while both proteins are still in the endoplasmic reticulum and is required for stabilization of MFSD1 in lysosomes but has no direct effect on its targeting to lysosomes or transporter activity.

The protein resides in the lysosome membrane. The catalysed reaction is L-alpha-aminoacyl-L-arginine(out) = L-alpha-aminoacyl-L-arginine(in). It catalyses the reaction L-arginyl-L-alpha-amino acid(out) = L-arginyl-L-alpha-amino acid(in). It carries out the reaction L-arginyl-glycine(out) = L-arginyl-glycine(in). The enzyme catalyses L-alpha-aminoacyl-L-lysine(out) = L-alpha-aminoacyl-L-lysine(in). The catalysed reaction is L-aspartyl-L-lysine(out) = L-aspartyl-L-lysine(in). It catalyses the reaction L-alanyl-L-lysine(out) = L-alanyl-L-lysine(in). It carries out the reaction L-lysyl-L-alpha-amino acid(out) = L-lysyl-L-alpha-amino acid(in). The enzyme catalyses L-lysyl-L-alanine(out) = L-lysyl-L-alanine(in). The catalysed reaction is L-lysyl-L-lysine(out) = L-lysyl-L-lysine(in). It catalyses the reaction L-lysyl-glycine(out) = L-lysyl-glycine(in). It carries out the reaction L-alpha-aminoacyl-L-histidine(out) = L-alpha-aminoacyl-L-histidine(in). The enzyme catalyses L-histidyl-L-alpha-amino acid(out) = L-histidyl-L-alpha-amino acid(in). The catalysed reaction is L-histidyl-glycine(out) = L-histidyl-glycine(in). In terms of biological role, lysosomal dipeptide uniporter that selectively exports lysine, arginine or histidine-containing dipeptides with a net positive charge from the lysosome lumen into the cytosol. Could play a role in a specific type of protein O-glycosylation indirectly regulating macrophages migration and tissue invasion. Also essential for liver homeostasis. The sequence is that of Lysosomal dipeptide transporter MFSD1 from Gallus gallus (Chicken).